The sequence spans 233 residues: MKQSTVFTLLLLLIGMAAYSFGWVQAVAEAAAQYVQMINNDAVRLGLLACTAALLMLPAFLYLHYVTQSVKNMTAAFQKLTQSHQSCCDFQQHNLCSRYAEDVKSLRDSYKNVRQTYVMAAVLCQVIIFGCMFEIVKAVPFRLHTPPAFSMGLAMLLILYLLFCMRTYLRQLFRHGSLFRKVFAGALAAAGIWWMLSFSISELLFLIILAAIQQIGSFIYKRFSYHSTASLDL.

6 consecutive transmembrane segments (helical) span residues 7–27 (FTLLLLLIGMAAYSFGWVQAV), 46–66 (GLLACTAALLMLPAFLYLHYV), 116–136 (TYVMAAVLCQVIIFGCMFEIV), 145–165 (TPPAFSMGLAMLLILYLLFCM), 176–198 (GSLFRKVFAGALAAAGIWWMLSF), and 203–220 (LLFLIILAAIQQIGSFIY).

It is found in the cell membrane. Involved in the production of the bacteriocin subtilosin. In Bacillus subtilis (strain 168), this protein is Antilisterial bacteriocin subtilosin biosynthesis protein AlbG (albG).